A 1612-amino-acid chain; its full sequence is DNA topoisomerase 2-beta (1612 aa).

Ala-2 is modified (N-acetylalanine). Lys-3 bears the N6-acetyllysine mark. Glycyl lysine isopeptide (Lys-Gly) (interchain with G-Cter in SUMO2) cross-links involve residues Lys-21 and Lys-22. Residues Asn-100, Asn-129, and 157–159 (SSN) each bind ATP. Residues Lys-165 and Lys-166 each participate in a glycyl lysine isopeptide (Lys-Gly) (interchain with G-Cter in SUMO2) cross-link. Residue 170–177 (GRNGYGAK) coordinates ATP. Residues Lys-216 and Lys-287 each participate in a glycyl lysine isopeptide (Lys-Gly) (interchain with G-Cter in SUMO2) cross-link. Residues 351–353 (KKK) are interaction with DNA. Residues Lys-355 and Lys-361 each participate in a glycyl lysine isopeptide (Lys-Gly) (interchain with G-Cter in SUMO2) cross-link. ATP is bound at residue 385 to 387 (QTK). Glycyl lysine isopeptide (Lys-Gly) (interchain with G-Cter in SUMO2) cross-links involve residues Lys-425, Lys-427, and Lys-434. The region spanning 464–581 (CTLILTEGDS…SLLKHGFLEE (118 aa)) is the Toprim domain. The Mg(2+) site is built by Glu-470, Asp-550, and Asp-552. Glycyl lysine isopeptide (Lys-Gly) (interchain with G-Cter in SUMO2) cross-links involve residues Lys-588, Lys-593, Lys-623, Lys-631, Lys-634, Lys-664, and Lys-700. One can recognise a Topo IIA-type catalytic domain in the interval 724–1177 (IPSLVDGFKP…SPSDLWKEDL (454 aa)). The O-(5'-phospho-DNA)-tyrosine intermediate role is filled by Tyr-814. The interval 999–1008 (KLQTTLTCNS) is interaction with DNA. Residue Lys-1080 forms a Glycyl lysine isopeptide (Lys-Gly) (interchain with G-Cter in SUMO2) linkage. The disordered stretch occupies residues 1098-1128 (AWKEAQEKAAEEEDTQNQHDDSSSDSGTPSG). Residues Lys-1202, Lys-1205, Lys-1214, and Lys-1215 each participate in a glycyl lysine isopeptide (Lys-Gly) (interchain with G-Cter in SUMO2) cross-link. A Phosphoserine modification is found at Ser-1224. Glycyl lysine isopeptide (Lys-Gly) (interchain with G-Cter in SUMO2) cross-links involve residues Lys-1238, Lys-1250, and Lys-1259. Positions 1245–1586 (LLKKKKGDPD…FTSEPPALPR (342 aa)) are disordered. Thr-1280 is modified (phosphothreonine). Residues Lys-1311 and Lys-1315 each participate in a glycyl lysine isopeptide (Lys-Gly) (interchain with G-Cter in SUMO2) cross-link. Composition is skewed to basic and acidic residues over residues 1322–1332 (PWSDDESKSES) and 1346–1358 (SLLRRAAAERPKY). Phosphoserine occurs at positions 1324, 1328, 1330, 1332, and 1346. A Phosphotyrosine modification is found at Tyr-1358. A compositionally biased stretch (acidic residues) spans 1362–1379 (FSEEEEEDADDDDDNNDL). The residue at position 1363 (Ser-1363) is a Phosphoserine. A Glycyl lysine isopeptide (Lys-Gly) (interchain with G-Cter in SUMO2) cross-link involves residue Lys-1385. Residue Ser-1387 is modified to Phosphoserine. Position 1390 is a phosphothreonine (Thr-1390). Ser-1400 bears the Phosphoserine mark. Tyr-1408 is modified (phosphotyrosine). At Ser-1411 the chain carries Phosphoserine. Residues 1417–1429 (ATPEKSSHDKKSQ) are compositionally biased toward basic and acidic residues. A Glycyl lysine isopeptide (Lys-Gly) (interchain with G-Cter in SUMO2) cross-link involves residue Lys-1427. A phosphoserine mark is found at Ser-1428, Ser-1439, and Ser-1441. Lys-1443 is covalently cross-linked (Glycyl lysine isopeptide (Lys-Gly) (interchain with G-Cter in SUMO2)). Basic and acidic residues predominate over residues 1443–1453 (KSEDDSAKFDS). Phosphoserine is present on residues Ser-1448, Ser-1453, and Ser-1460. Lys-1477 is covalently cross-linked (Glycyl lysine isopeptide (Lys-Gly) (interchain with G-Cter in SUMO2)). An interaction with PLSCR1 region spans residues 1493-1499 (KAKRAPK). Ser-1509, Ser-1511, and Ser-1513 each carry phosphoserine. The segment covering 1526–1536 (GKGRGAKKRKA) has biased composition (basic residues). Phosphoserine occurs at positions 1537 and 1539. Positions 1550 to 1561 (KPSKTASKKPKK) are enriched in basic residues. The residue at position 1562 (Thr-1562) is a Phosphothreonine. 2 positions are modified to phosphoserine: Ser-1563 and Ser-1568. Tyr-1596 bears the Phosphotyrosine mark. Residue Ser-1600 is modified to Phosphoserine.

This sequence belongs to the type II topoisomerase family. Homodimer. Interacts with PLSCR1 and KIAA1210. Mg(2+) serves as cofactor. It depends on Mn(2+) as a cofactor. Requires Ca(2+) as cofactor.

The protein localises to the nucleus. It localises to the nucleolus. It is found in the nucleoplasm. It carries out the reaction ATP-dependent breakage, passage and rejoining of double-stranded DNA.. Key decatenating enzyme that alters DNA topology by binding to two double-stranded DNA molecules, generating a double-stranded break in one of the strands, passing the intact strand through the broken strand, and religating the broken strand. This Cricetulus longicaudatus (Long-tailed dwarf hamster) protein is DNA topoisomerase 2-beta (TOP2B).